Here is a 202-residue protein sequence, read N- to C-terminus: Pyridoxal 5'-phosphate synthase subunit PdxT (202 aa).

Position 52-54 (52-54 (GES)) interacts with L-glutamine. C84 (nucleophile) is an active-site residue. Residues R116 and 143 to 144 (IR) each bind L-glutamine. Catalysis depends on charge relay system residues H184 and E186.

The protein belongs to the glutaminase PdxT/SNO family. As to quaternary structure, in the presence of PdxS, forms a dodecamer of heterodimers. Only shows activity in the heterodimer.

It carries out the reaction aldehydo-D-ribose 5-phosphate + D-glyceraldehyde 3-phosphate + L-glutamine = pyridoxal 5'-phosphate + L-glutamate + phosphate + 3 H2O + H(+). The enzyme catalyses L-glutamine + H2O = L-glutamate + NH4(+). The protein operates within cofactor biosynthesis; pyridoxal 5'-phosphate biosynthesis. In terms of biological role, catalyzes the hydrolysis of glutamine to glutamate and ammonia as part of the biosynthesis of pyridoxal 5'-phosphate. The resulting ammonia molecule is channeled to the active site of PdxS. The polypeptide is Pyridoxal 5'-phosphate synthase subunit PdxT (Pyrobaculum neutrophilum (strain DSM 2338 / JCM 9278 / NBRC 100436 / V24Sta) (Thermoproteus neutrophilus)).